Reading from the N-terminus, the 473-residue chain is Suppressor of SWI4 1 homolog (473 aa).

In terms of domain architecture, Brix spans 29 to 292 (PHSFVFTRGC…LIKVQEGVGE (264 aa)). Phosphoserine occurs at positions 238 and 240. The tract at residues 323–473 (AQRQAQQAQN…GRGRPGKRVA (151 aa)) is disordered. Residues 324–334 (QRQAQQAQNVQ) are compositionally biased toward low complexity. A compositionally biased stretch (basic and acidic residues) spans 335–352 (RKQEQREAHRKKSLEGMK). S359 is modified (phosphoserine). Acidic residues predominate over residues 375 to 388 (LGEDDDEQEDDDIE). Positions 409–421 (KRLAKSPGRKRKR) are enriched in basic residues. Basic and acidic residues predominate over residues 422-443 (WEMDRGRGRLCDQKFPKTKDKS). K438 bears the N6-acetyllysine mark. The span at 462–473 (GRGRGRPGKRVA) shows a compositional bias: basic residues.

As to expression, widely expressed.

The protein resides in the nucleus. It is found in the nucleolus. Functionally, may have a role in cell growth. In Homo sapiens (Human), this protein is Suppressor of SWI4 1 homolog (PPAN).